The sequence spans 316 residues: Transaldolase (316 aa).

K131 acts as the Schiff-base intermediate with substrate in catalysis.

The protein belongs to the transaldolase family. Type 1 subfamily. In terms of assembly, homodimer.

It is found in the cytoplasm. The enzyme catalyses D-sedoheptulose 7-phosphate + D-glyceraldehyde 3-phosphate = D-erythrose 4-phosphate + beta-D-fructose 6-phosphate. It functions in the pathway carbohydrate degradation; pentose phosphate pathway; D-glyceraldehyde 3-phosphate and beta-D-fructose 6-phosphate from D-ribose 5-phosphate and D-xylulose 5-phosphate (non-oxidative stage): step 2/3. Functionally, transaldolase is important for the balance of metabolites in the pentose-phosphate pathway. The sequence is that of Transaldolase from Buchnera aphidicola subsp. Acyrthosiphon pisum (strain 5A).